We begin with the raw amino-acid sequence, 1202 residues long: MAFKSFIYSKGYHRSAAQKKTATSFFDSSYQYLRQNQGLVNSDPVLHASHLHPHPVVVANVNYNNVDDILHPHDLDSSINNTNNPLTHEELLYNQNVSLRSLKQQQSTNYVNNNNNNQHRYYSTGPTLPTNQYDPLNFSNRNFQDLSLKTSQPSVQQPQNEYSLLKDENAPVWKEDTEPCLNKSTYLQTHIDEINRCYEQKNYNKINSLYQSLKRNDIVPPLEIFTKVLDSLCKRPLDNNDLDNKMYELLTCYQDMINNRLKPPDEIYNIVLLSLFKGSILAYQFENPNGSDFYKIAIELFNTTTNDPKQKSVVKFRNFSKDVLDYNLLAMNIYPGHITLSKAQQVIKSSPAFIKDSFYFIACFSYAKLTNDKFAIKELYEDFRLSLSSGSPDQGLFDDQFEIYSVILSSFIETGEVELATNLLDDLVSKIQSSNGLASNISLLLSSFLISMSKVDPSKAYEIWFKFHNLNWIPEFSYEFYLVFMANSFQDWNLTKKIYDYIFPMERNLSPLKKQKLSDYLLHPIGVDSITTSLLDYSLQLKDNEVIMKILEESIVKNFSFDIGIYPFVFNYLREIQCGEDYLMRFIESHAEFIKKSNSINKFQFLNMIVDNFQSQSLLNKISHAKFFKNFVEDFNLENCELVSYNGLISCINNFIKIPKTIKDFPYILEIHAILVTKLFDFDTYPILQNGNNEVLLKFRDQIEHQFKMLAQNFCRLNLDPNLLAGVVSQAMKMVNLDDTANGQDLLNFFNHPGDWDKSYPLSLGSFIRNSPRGGIREFTKLSKEGYCFDYDTYKELIIKRAINKQIIDKCLEVCPDSIELKNIVNLMISKIPGRNLTQLIINNPKFSKVFVPNLRNDSMLKLIENCESLSNFIRICDFPEKFKSIAIQAENKNAIELIYERLFDGGKYADILRYNNIVPVLNLELLLKSCIRSGEFKKYESLSKKFNDKISESSKIDIQLEYLINKNDLKGAFTLFEKTPRELRTPHKTMDLYTFALFLDSFNRNITYYESPENTLQFANILSSQTSFINLLSTYNLIAHSDHLMNFNVGGMAAKVKKEILNQMLNNLYDSIRLLSPSIENDKSMKEKLREKVKNYCRFKAYLKSPELDMDELKTLVSVESFLNPFTPSMLFNNLIETIYINEHASSLVLQNGLIYSLQQKGLNKILSYLEESFITSGNDANIEKVREFRSLLRKSKPLQA.

The transit peptide at 1–122 (MAFKSFIYSK…NNNNNQHRYY (122 aa)) directs the protein to the mitochondrion. Residues 109-134 (NYVNNNNNNQHRYYSTGPTLPTNQYD) are disordered. The span at 118–134 (QHRYYSTGPTLPTNQYD) shows a compositional bias: polar residues.

In terms of assembly, consists of an RNA moiety (RPM1) and the protein component (RPM2). Both are necessary for full enzymatic activity.

The protein resides in the mitochondrion. It catalyses the reaction Endonucleolytic cleavage of RNA, removing 5'-extranucleotides from tRNA precursor.. Its function is as follows. Ribonuclease P generates mature tRNA molecules by cleaving their 5'-ends. The sequence is that of Ribonuclease P protein component, mitochondrial (RPM2) from Saccharomyces cerevisiae (strain ATCC 204508 / S288c) (Baker's yeast).